The chain runs to 99 residues: Nucleoid-associated protein LL0120 (99 aa).

Belongs to the YbaB/EbfC family. Homodimer.

It localises to the cytoplasm. It is found in the nucleoid. Functionally, binds to DNA and alters its conformation. May be involved in regulation of gene expression, nucleoid organization and DNA protection. The polypeptide is Nucleoid-associated protein LL0120 (ybcG) (Lactococcus lactis subsp. lactis (strain IL1403) (Streptococcus lactis)).